Here is a 156-residue protein sequence, read N- to C-terminus: Small ribosomal subunit protein uS7c (156 aa).

This sequence belongs to the universal ribosomal protein uS7 family. Part of the 30S ribosomal subunit.

It is found in the plastid. Its subcellular location is the chloroplast. Functionally, one of the primary rRNA binding proteins, it binds directly to 16S rRNA where it nucleates assembly of the head domain of the 30S subunit. This Chlorokybus atmophyticus (Soil alga) protein is Small ribosomal subunit protein uS7c (rps7).